Reading from the N-terminus, the 297-residue chain is MNLGTLVSETRNPQTMDLDALPTPELVKRFNEQDTLVAEAVKATLPDVARAVDAAAAALKSGGRIIYMGAGTSGRLGVLDASECPPTFGVPHGLVVGLIAGGPGALLKAVEGAEDSQQAGEDDLVALNLQEQDLVVGLAASGRTPYVIGGLRYARQSGCTTVAVSCNPDSPIAREANIAISPVVGPEALTGSTRLKSGTAQKMVLNMISTGAMVKFGKVYQNLMVDMKATNVKLVDRACRMVVEATGIGREEAEALLKQTDFEVKPAILMALTGLDAAAAREKLAAHQGFLRAALEH.

The region spanning 55 to 218 (AAAALKSGGR…STGAMVKFGK (164 aa)) is the SIS domain. Glu83 acts as the Proton donor in catalysis. The active site involves Glu114.

Belongs to the GCKR-like family. MurNAc-6-P etherase subfamily. Homodimer.

The enzyme catalyses N-acetyl-D-muramate 6-phosphate + H2O = N-acetyl-D-glucosamine 6-phosphate + (R)-lactate. It functions in the pathway amino-sugar metabolism; 1,6-anhydro-N-acetylmuramate degradation. The protein operates within amino-sugar metabolism; N-acetylmuramate degradation. It participates in cell wall biogenesis; peptidoglycan recycling. Specifically catalyzes the cleavage of the D-lactyl ether substituent of MurNAc 6-phosphate, producing GlcNAc 6-phosphate and D-lactate. Together with AnmK, is also required for the utilization of anhydro-N-acetylmuramic acid (anhMurNAc) either imported from the medium or derived from its own cell wall murein, and thus plays a role in cell wall recycling. This is N-acetylmuramic acid 6-phosphate etherase from Salmonella paratyphi A (strain ATCC 9150 / SARB42).